A 273-amino-acid polypeptide reads, in one-letter code: uncharacterized protein (273 aa).

A helical transmembrane segment spans residues 7–25 (FFRWAFLIATVYVAYYFLV). Disordered regions lie at residues 34–154 (KPQK…LKMK) and 168–273 (LHNS…DSLW). The span at 36–54 (QKSKLTKLGKQKQRQKQKN) shows a compositional bias: basic residues. Residues 55-91 (TKKDTLVNRETPSKKSQKLETSDALKSKSKDSSKKEP) are compositionally biased toward basic and acidic residues. Over residues 92-101 (VVVPKKGTPK) the composition is skewed to low complexity. Residues 115-144 (PKKEKLVGKNPAEKEDTTDVEDTQKLEQKH) are compositionally biased toward basic and acidic residues. Residues 145–154 (STTPSSLKMK) show a composition bias toward polar residues. Positions 201-212 (KRQRQNQQKKLR) are enriched in basic residues. A compositionally biased stretch (basic and acidic residues) spans 213–240 (AKEMQELADEEQRRRLAAHRKELHEANR). Over residues 245–266 (LNNSSRSAYSYINNGQAGSSKG) the composition is skewed to polar residues.

The protein localises to the cytoplasm. It is found in the membrane. This is an uncharacterized protein from Schizosaccharomyces pombe (strain 972 / ATCC 24843) (Fission yeast).